Consider the following 349-residue polypeptide: 1-acylglycerol-3-phosphate O-acyltransferase ABHD5 (349 aa).

N-acetylalanine is present on Ala-2. The AB hydrolase-1 domain maps to 77–184 (PLVLLHGFGG…LVEPWGFPER (108 aa)). The residue at position 122 (Ser-122) is a Phosphoserine. The HXXXXD motif motif lies at 327–332 (HYVYAD).

It belongs to the peptidase S33 family. ABHD4/ABHD5 subfamily. In terms of assembly, interacts with ADRP, PLIN and PNPLA2. Interacts with PLIN5; promotes interaction with PNPLA2.

It localises to the cytoplasm. The protein localises to the lipid droplet. The catalysed reaction is a 1-acyl-sn-glycero-3-phosphate + an acyl-CoA = a 1,2-diacyl-sn-glycero-3-phosphate + CoA. It catalyses the reaction 1-(9Z-octadecenoyl)-sn-glycero-3-phosphate + (9Z)-octadecenoyl-CoA = 1,2-di-(9Z-octadecenoyl)-sn-glycero-3-phosphate + CoA. It carries out the reaction 1-(9Z-octadecenoyl)-sn-glycero-3-phosphate + hexadecanoyl-CoA = 1-(9Z)-octadecenoyl-2-hexadecanoyl-sn-glycero-3-phosphate + CoA. The enzyme catalyses 1-(9Z-octadecenoyl)-sn-glycero-3-phosphate + octadecanoyl-CoA = 1-(9Z-octadecenoyl)-2-octadecanoyl-sn-glycero-3-phosphate + CoA. The catalysed reaction is 1-(9Z-octadecenoyl)-sn-glycero-3-phosphate + (5Z,8Z,11Z,14Z)-eicosatetraenoyl-CoA = 1-(9Z)-octadecenoyl-2-(5Z,8Z,11Z,14Z)-eicosatetraenoyl-sn-glycero-3-phosphate + CoA. It catalyses the reaction eicosanoyl-CoA + 1-(9Z-octadecenoyl)-sn-glycero-3-phosphate = 1-(9Z)-octadecenoyl-2-eicosanoyl-sn-glycero-3-phosphate + CoA. It carries out the reaction 1-hexadecanoyl-sn-glycero-3-phosphate + (9Z)-octadecenoyl-CoA = 1-hexadecanoyl-2-(9Z-octadecenoyl)-sn-glycero-3-phosphate + CoA. The enzyme catalyses 1-octadecanoyl-sn-glycero-3-phosphate + (9Z)-octadecenoyl-CoA = 1-octadecanoyl-2-(9Z-octadecenoyl)-sn-glycero-3-phosphate + CoA. The catalysed reaction is 1-(5Z,8Z,11Z,14Z-eicosatetraenoyl)-sn-glycero-3-phosphate + (9Z)-octadecenoyl-CoA = 1-(5Z,8Z,11Z,14Z)-eicosatetraenoyl-2-(9Z)-octadecenoyl-sn-glycero-3-phosphate + CoA. Its activity is regulated as follows. Acyltransferase activity is inhibited by detergents such as Triton X-100 and 3-[(3-cholamidopropyl)dimethylammonio]-1-propanesulfonate (CHAPS). Acyltransferase activity is inhibited by the presence of magnesium and calcium. In terms of biological role, coenzyme A-dependent lysophosphatidic acid acyltransferase that catalyzes the transfer of an acyl group on a lysophosphatidic acid. Functions preferentially with 1-oleoyl-lysophosphatidic acid followed by 1-palmitoyl-lysophosphatidic acid, 1-stearoyl-lysophosphatidic acid and 1-arachidonoyl-lysophosphatidic acid as lipid acceptor. Functions preferentially with arachidonoyl-CoA followed by oleoyl-CoA as acyl group donors. Functions in phosphatidic acid biosynthesis. May regulate the cellular storage of triacylglycerol through activation of the phospholipase PNPLA2. Involved in keratinocyte differentiation. Regulates lipid droplet fusion. The chain is 1-acylglycerol-3-phosphate O-acyltransferase ABHD5 from Pongo abelii (Sumatran orangutan).